Reading from the N-terminus, the 68-residue chain is MGVDVNVIFQIAGVGIVVAFLHTILDQMGKKEYAQWVTLLGFIYILFMVATIVDDLFKKIKAVFLFQG.

The next 2 helical transmembrane spans lie at 5-25 and 33-53; these read VNVIFQIAGVGIVVAFLHTIL and YAQWVTLLGFIYILFMVATIV.

The protein localises to the cell membrane. This is Stage III sporulation protein AC (spoIIIAC) from Bacillus subtilis (strain 168).